The primary structure comprises 260 residues: Lysozyme D (260 aa).

The N-terminal stretch at 1–19 (MRLLVTLILLIFVLTVSGQ) is a signal peptide. Residues 83–148 (GSTTTGGTGS…SGGSSGSGSG (66 aa)) form a disordered region. Composition is skewed to gly residues over residues 101 to 119 (SGSGSGSGSGSGSGSGSGT) and 129 to 147 (SGSGSGSSSGSGGSSGSGS).

This sequence belongs to the dictyostelium lysozyme family. In terms of processing, contains disulfide bonds.

It is found in the cytoplasmic vesicle lumen. The catalysed reaction is Hydrolysis of (1-&gt;4)-beta-linkages between N-acetylmuramic acid and N-acetyl-D-glucosamine residues in a peptidoglycan and between N-acetyl-D-glucosamine residues in chitodextrins.. Its function is as follows. Has antibacterial activity. The chain is Lysozyme D (alyD-1) from Dictyostelium discoideum (Social amoeba).